A 115-amino-acid polypeptide reads, in one-letter code: ATP synthase subunit g, mitochondrial (115 aa).

M1 is modified (N-acetylmethionine). Residues S3 and S62 each carry the phosphoserine modification.

It belongs to the ATPase g subunit family. F-type ATPases have 2 components, CF(1) - the catalytic core - and CF(0) - the membrane proton channel. In yeast, the dimeric form of ATP synthase consists of 17 polypeptides: alpha, beta, gamma, delta, epsilon, 4 (B), 5 (OSCP), 6 (A), 8, 9 (C), d, E (Tim11), f, g, h, i/j and k. In terms of processing, phosphorylation on Ser-62 impairs ATP synthase dimerization.

It is found in the mitochondrion membrane. Mitochondrial membrane ATP synthase (F(1)F(0) ATP synthase or Complex V) produces ATP from ADP in the presence of a proton gradient across the membrane which is generated by electron transport complexes of the respiratory chain. F-type ATPases consist of two structural domains, F(1) - containing the extramembraneous catalytic core, and F(0) - containing the membrane proton channel, linked together by a central stalk and a peripheral stalk. During catalysis, ATP synthesis in the catalytic domain of F(1) is coupled via a rotary mechanism of the central stalk subunits to proton translocation. Part of the complex F(0) domain. Minor subunit located with subunit a in the membrane. This is ATP synthase subunit g, mitochondrial (ATP20) from Saccharomyces cerevisiae (strain ATCC 204508 / S288c) (Baker's yeast).